The chain runs to 254 residues: Major prion protein (254 aa).

The N-terminal stretch at 1–22 (MANLSYWLLALFVATWTDVGLC) is a signal peptide. The segment at 23–231 (KKRPKPGGWN…SQAYYDGRRS (209 aa)) is interaction with GRB2, ERI3 and SYN1. Positions 25-104 (RPKPGGWNTG…THNQWNKPSK (80 aa)) are disordered. 5 repeat units span residues 51 to 59 (PQGGGTWGQ), 60 to 67 (PHGGGWGQ), 68 to 75 (PHGGGWGQ), 76 to 83 (PHGGGWGQ), and 84 to 91 (PHGGGWGQ). The interval 51–91 (PQGGGTWGQPHGGGWGQPHGGGWGQPHGGGWGQPHGGGWGQ) is 5 X 8 AA tandem repeats of P-H-G-G-G-W-G-Q. Residues 52 to 95 (QGGGTWGQPHGGGWGQPHGGGWGQPHGGGWGQPHGGGWGQGGGT) show a composition bias toward gly residues. Positions 61, 62, 63, 69, 70, 71, 77, 78, 79, 85, 86, and 87 each coordinate Cu(2+). Residues 90 to 231 (GQGGGTHNQW…SQAYYDGRRS (142 aa)) form a prP27-30 (protease resistant core) region. A disulfide bridge links Cys-179 with Cys-214. Asn-181 and Asn-197 each carry an N-linked (GlcNAc...) asparagine glycan. A lipid anchor (GPI-anchor amidated serine) is attached at Ser-231. Residues 232–254 (SAVLFSSPPVILLISFLIFLIVG) constitute a propeptide, removed in mature form.

The protein belongs to the prion family. As to quaternary structure, monomer and homodimer. Has a tendency to aggregate into amyloid fibrils containing a cross-beta spine, formed by a steric zipper of superposed beta-strands. Soluble oligomers may represent an intermediate stage on the path to fibril formation. Copper binding may promote oligomerization. Interacts with GRB2, APP, ERI3/PRNPIP and SYN1. Mislocalized cytosolically exposed PrP interacts with MGRN1; this interaction alters MGRN1 subcellular location and causes lysosomal enlargement. Interacts with KIAA1191.

It is found in the cell membrane. It localises to the golgi apparatus. Its function is as follows. Its primary physiological function is unclear. Has cytoprotective activity against internal or environmental stresses. May play a role in neuronal development and synaptic plasticity. May be required for neuronal myelin sheath maintenance. May play a role in iron uptake and iron homeostasis. Soluble oligomers are toxic to cultured neuroblastoma cells and induce apoptosis (in vitro). Association with GPC1 (via its heparan sulfate chains) targets PRNP to lipid rafts. Also provides Cu(2+) or Zn(2+) for the ascorbate-mediated GPC1 deaminase degradation of its heparan sulfate side chains. This chain is Major prion protein (PRNP), found in Cricetulus griseus (Chinese hamster).